The sequence spans 422 residues: GTPase Obg (422 aa).

Residues 4–161 (LHFVDEAFNE…FKIKTELKVL (158 aa)) form the Obg domain. An OBG-type G domain is found at 162-327 (ADIGLLGFPS…LKYEMSSLLQ (166 aa)). Residues 168–175 (GFPSVGKS), 193–197 (FTTIK), 214–217 (DLPG), 281–284 (NKMD), and 308–310 (SLV) contribute to the GTP site. Positions 175 and 195 each coordinate Mg(2+). Positions 345–422 (TLPDNQNTIS…KICDRLFYFL (78 aa)) constitute an OCT domain.

The protein belongs to the TRAFAC class OBG-HflX-like GTPase superfamily. OBG GTPase family. In terms of assembly, monomer. It depends on Mg(2+) as a cofactor.

It is found in the cytoplasm. An essential GTPase which binds GTP, GDP and possibly (p)ppGpp with moderate affinity, with high nucleotide exchange rates and a fairly low GTP hydrolysis rate. Plays a role in control of the cell cycle, stress response, ribosome biogenesis and in those bacteria that undergo differentiation, in morphogenesis control. The protein is GTPase Obg of Onion yellows phytoplasma (strain OY-M).